The primary structure comprises 253 residues: uncharacterized protein (253 aa).

2 consecutive C2HC LYAR-type zinc fingers follow at residues 1 to 26 (MVFFSCNNCGEACKKNQVERHLFQCR) and 27 to 51 (NTTFSCIDCQLVYTRETYKDHVKCI). Residues Cys-6, Cys-9, His-21, Cys-25, Cys-32, Cys-35, His-47, and Cys-50 each contribute to the Zn(2+) site. A coiled-coil region spans residues 136-171 (AAEADKMREEAIRKQEETQKMEKAQKEAAAAAKKET).

It localises to the nucleus. This is an uncharacterized protein from Caenorhabditis elegans.